The sequence spans 206 residues: Thymidylate kinase (206 aa).

Glycine 11–threonine 18 is a binding site for ATP.

The protein belongs to the thymidylate kinase family.

The catalysed reaction is dTMP + ATP = dTDP + ADP. Its function is as follows. Phosphorylation of dTMP to form dTDP in both de novo and salvage pathways of dTTP synthesis. This Burkholderia vietnamiensis (strain G4 / LMG 22486) (Burkholderia cepacia (strain R1808)) protein is Thymidylate kinase.